A 170-amino-acid polypeptide reads, in one-letter code: Protein SprT (170 aa).

In terms of domain architecture, SprT-like spans 22–165; sequence LQLANQHLGT…RQCGEKLQFI (144 aa). His-78 contributes to the Zn(2+) binding site. Glu-79 is a catalytic residue. His-82 serves as a coordination point for Zn(2+).

This sequence belongs to the SprT family. Requires Zn(2+) as cofactor.

The protein resides in the cytoplasm. The polypeptide is Protein SprT (Yersinia pseudotuberculosis serotype O:1b (strain IP 31758)).